A 473-amino-acid chain; its full sequence is GTPase Der (473 aa).

EngA-type G domains are found at residues 3 to 167 (FTVA…GKDR) and 203 to 378 (LRVA…RVWN). Residues 9–16 (GRPNVGKS), 56–60 (DTAGL), 119–122 (NKSE), 209–216 (GRPNAGKS), 256–260 (DTAGM), and 321–324 (NKWD) contribute to the GTP site. The KH-like domain occupies 379–463 (KRISTARLNR…PIRIHFRSAE (85 aa)).

This sequence belongs to the TRAFAC class TrmE-Era-EngA-EngB-Septin-like GTPase superfamily. EngA (Der) GTPase family. In terms of assembly, associates with the 50S ribosomal subunit.

In terms of biological role, GTPase that plays an essential role in the late steps of ribosome biogenesis. In Rhizobium etli (strain CIAT 652), this protein is GTPase Der.